Consider the following 215-residue polypeptide: Cytochrome b6 (215 aa).

A helical transmembrane segment spans residues 32-52 (IFYCLGGITLTCFLIQFATGF). Residue Cys-35 participates in heme c binding. Residues His-86 and His-100 each coordinate heme b. The next 3 helical transmembrane spans lie at 90–110 (ASMM…TGGF), 116–136 (LTWV…VTGY), and 186–206 (LHTF…FLMI). 2 residues coordinate heme b: His-187 and His-202.

This sequence belongs to the cytochrome b family. PetB subfamily. The 4 large subunits of the cytochrome b6-f complex are cytochrome b6, subunit IV (17 kDa polypeptide, PetD), cytochrome f and the Rieske protein, while the 4 small subunits are PetG, PetL, PetM and PetN. The complex functions as a dimer. Requires heme b as cofactor. Heme c serves as cofactor.

The protein localises to the cellular thylakoid membrane. Component of the cytochrome b6-f complex, which mediates electron transfer between photosystem II (PSII) and photosystem I (PSI), cyclic electron flow around PSI, and state transitions. In Synechococcus elongatus (strain ATCC 33912 / PCC 7942 / FACHB-805) (Anacystis nidulans R2), this protein is Cytochrome b6.